Reading from the N-terminus, the 197-residue chain is Small ribosomal subunit protein uS4B (197 aa).

In terms of domain architecture, S4 RNA-binding spans Cys-88–Phe-151.

The protein belongs to the universal ribosomal protein uS4 family. Part of the 30S ribosomal subunit. Contacts protein S5. The interaction surface between S4 and S5 is involved in control of translational fidelity.

Its function is as follows. One of the primary rRNA binding proteins, it binds directly to 16S rRNA where it nucleates assembly of the body of the 30S subunit. In terms of biological role, with S5 and S12 plays an important role in translational accuracy. The protein is Small ribosomal subunit protein uS4B of Clostridium botulinum (strain Langeland / NCTC 10281 / Type F).